Consider the following 101-residue polypeptide: NAD(P)H-quinone oxidoreductase subunit 4L, chloroplastic (101 aa).

A run of 3 helical transmembrane segments spans residues 2–22 (ILEHVLVLSAYLFLIGLYGLI), 32–52 (MCLELILNAVNMNFVTFSDFF), and 61–81 (IFCIFVIAIAAAEAAIGLAIV).

The protein belongs to the complex I subunit 4L family. As to quaternary structure, NDH is composed of at least 16 different subunits, 5 of which are encoded in the nucleus.

Its subcellular location is the plastid. The protein localises to the chloroplast thylakoid membrane. The enzyme catalyses a plastoquinone + NADH + (n+1) H(+)(in) = a plastoquinol + NAD(+) + n H(+)(out). It carries out the reaction a plastoquinone + NADPH + (n+1) H(+)(in) = a plastoquinol + NADP(+) + n H(+)(out). Functionally, NDH shuttles electrons from NAD(P)H:plastoquinone, via FMN and iron-sulfur (Fe-S) centers, to quinones in the photosynthetic chain and possibly in a chloroplast respiratory chain. The immediate electron acceptor for the enzyme in this species is believed to be plastoquinone. Couples the redox reaction to proton translocation, and thus conserves the redox energy in a proton gradient. This is NAD(P)H-quinone oxidoreductase subunit 4L, chloroplastic from Crucihimalaya wallichii (Rock-cress).